A 215-amino-acid polypeptide reads, in one-letter code: Adenylate kinase (215 aa).

ATP is bound at residue Gly10–Thr15. The tract at residues Ser30–Val59 is NMP. AMP contacts are provided by residues Thr31, Arg36, Glu57–Val59, Gly85–Arg88, and Gln92. Residues Gly126 to Asp163 are LID. Arg127 contacts ATP. Residues Cys130 and Cys133 each coordinate Zn(2+). Thr136–Tyr137 contributes to the ATP binding site. The Zn(2+) site is built by Cys150 and Asp153. 2 residues coordinate AMP: Arg160 and Arg171. Lys199 is a binding site for ATP.

Belongs to the adenylate kinase family. As to quaternary structure, monomer.

It localises to the cytoplasm. It catalyses the reaction AMP + ATP = 2 ADP. Its pathway is purine metabolism; AMP biosynthesis via salvage pathway; AMP from ADP: step 1/1. Functionally, catalyzes the reversible transfer of the terminal phosphate group between ATP and AMP. Plays an important role in cellular energy homeostasis and in adenine nucleotide metabolism. This Staphylococcus aureus (strain COL) protein is Adenylate kinase.